The sequence spans 75 residues: Protein Tlp homolog (75 aa).

The tract at residues 52-75 (RREALDGMREEIKDEARDKKNGYM) is disordered.

It belongs to the Tlp family.

In Clostridium botulinum (strain Okra / Type B1), this protein is Protein Tlp homolog.